The following is a 406-amino-acid chain: Tryptophan synthase beta chain (406 aa).

The residue at position 99 (lysine 99) is an N6-(pyridoxal phosphate)lysine.

Belongs to the TrpB family. In terms of assembly, tetramer of two alpha and two beta chains. Pyridoxal 5'-phosphate is required as a cofactor.

The catalysed reaction is (1S,2R)-1-C-(indol-3-yl)glycerol 3-phosphate + L-serine = D-glyceraldehyde 3-phosphate + L-tryptophan + H2O. Its pathway is amino-acid biosynthesis; L-tryptophan biosynthesis; L-tryptophan from chorismate: step 5/5. Its function is as follows. The beta subunit is responsible for the synthesis of L-tryptophan from indole and L-serine. This Sinorhizobium fredii (strain NBRC 101917 / NGR234) protein is Tryptophan synthase beta chain.